Here is a 426-residue protein sequence, read N- to C-terminus: Histidine--tRNA ligase (426 aa).

Belongs to the class-II aminoacyl-tRNA synthetase family. In terms of assembly, homodimer.

Its subcellular location is the cytoplasm. It carries out the reaction tRNA(His) + L-histidine + ATP = L-histidyl-tRNA(His) + AMP + diphosphate + H(+). This is Histidine--tRNA ligase from Chlorobium phaeovibrioides (strain DSM 265 / 1930) (Prosthecochloris vibrioformis (strain DSM 265)).